Consider the following 400-residue polypeptide: CCA-adding enzyme (400 aa).

ATP is bound by residues G32 and R35. Residues G32 and R35 each contribute to the CTP site. Mg(2+) is bound by residues D45 and D47. ATP contacts are provided by R116, D159, R162, R165, and R168. R116, D159, R162, R165, and R168 together coordinate CTP.

This sequence belongs to the tRNA nucleotidyltransferase/poly(A) polymerase family. Bacterial CCA-adding enzyme type 3 subfamily. Homodimer. It depends on Mg(2+) as a cofactor.

The catalysed reaction is a tRNA precursor + 2 CTP + ATP = a tRNA with a 3' CCA end + 3 diphosphate. It catalyses the reaction a tRNA with a 3' CCA end + 2 CTP + ATP = a tRNA with a 3' CCACCA end + 3 diphosphate. Catalyzes the addition and repair of the essential 3'-terminal CCA sequence in tRNAs without using a nucleic acid template. Adds these three nucleotides in the order of C, C, and A to the tRNA nucleotide-73, using CTP and ATP as substrates and producing inorganic pyrophosphate. tRNA 3'-terminal CCA addition is required both for tRNA processing and repair. Also involved in tRNA surveillance by mediating tandem CCA addition to generate a CCACCA at the 3' terminus of unstable tRNAs. While stable tRNAs receive only 3'-terminal CCA, unstable tRNAs are marked with CCACCA and rapidly degraded. The polypeptide is CCA-adding enzyme (Limosilactobacillus fermentum (strain NBRC 3956 / LMG 18251) (Lactobacillus fermentum)).